The primary structure comprises 238 residues: uncharacterized protein (238 aa).

A signal peptide spans 1 to 28 (MSRNSRGSGRYVFVVLACVFGYTRAVHA).

This is an uncharacterized protein from Treponema pallidum (strain Nichols).